The chain runs to 1069 residues: Receptor-type guanylate cyclase gcy-29 (1069 aa).

The first 23 residues, 1–23 (MLPNFWNFQFIFVIFCWIPIVVS), serve as a signal peptide directing secretion. Residues 24–458 (DEKIVLKIGS…FREENCDYTQ (435 aa)) are Extracellular-facing. N-linked (GlcNAc...) asparagine glycans are attached at residues N161, N240, and N407. A helical membrane pass occupies residues 459 to 479 (TIVIATAVVCIILTVFLGIWL). Residues 480-1069 (RRACETSALD…FKKKNNTFDF (590 aa)) are Cytoplasmic-facing. In terms of domain architecture, Protein kinase spans 497–806 (RDDVQILDEE…RVRLATEIAL (310 aa)). ATP is bound by residues 503–511 (LDEEQVKSV) and K527. A Guanylate cyclase domain is found at 876 to 1006 (TVMFSDIVGF…ETVNIAAVME (131 aa)). Mg(2+)-binding residues include D881, I882, and D925.

Belongs to the adenylyl cyclase class-4/guanylyl cyclase family. As to expression, expressed bilaterally in ASE and AFD sensory neurons.

The protein localises to the cell membrane. It carries out the reaction GTP = 3',5'-cyclic GMP + diphosphate. Its function is as follows. Guanylate cyclase involved in the production of the second messenger cGMP. The chain is Receptor-type guanylate cyclase gcy-29 from Caenorhabditis elegans.